Reading from the N-terminus, the 214-residue chain is tRNA (guanine-N(7)-)-methyltransferase (214 aa).

Glu44, Glu69, Asp96, and Asp118 together coordinate S-adenosyl-L-methionine. Asp118 is a catalytic residue. Residues Lys122, Asp154, and 191 to 194 (TEYE) contribute to the substrate site.

This sequence belongs to the class I-like SAM-binding methyltransferase superfamily. TrmB family.

The enzyme catalyses guanosine(46) in tRNA + S-adenosyl-L-methionine = N(7)-methylguanosine(46) in tRNA + S-adenosyl-L-homocysteine. It participates in tRNA modification; N(7)-methylguanine-tRNA biosynthesis. Catalyzes the formation of N(7)-methylguanine at position 46 (m7G46) in tRNA. This chain is tRNA (guanine-N(7)-)-methyltransferase, found in Listeria innocua serovar 6a (strain ATCC BAA-680 / CLIP 11262).